A 600-amino-acid chain; its full sequence is DNA mismatch repair protein MutL (600 aa).

Belongs to the DNA mismatch repair MutL/HexB family.

This protein is involved in the repair of mismatches in DNA. It is required for dam-dependent methyl-directed DNA mismatch repair. May act as a 'molecular matchmaker', a protein that promotes the formation of a stable complex between two or more DNA-binding proteins in an ATP-dependent manner without itself being part of a final effector complex. In Rickettsia typhi (strain ATCC VR-144 / Wilmington), this protein is DNA mismatch repair protein MutL.